The following is a 252-amino-acid chain: 1-(5-phosphoribosyl)-5-[(5-phosphoribosylamino)methylideneamino] imidazole-4-carboxamide isomerase (252 aa).

Asp8 functions as the Proton acceptor in the catalytic mechanism. Asp129 (proton donor) is an active-site residue.

It belongs to the HisA/HisF family.

The protein localises to the cytoplasm. It carries out the reaction 1-(5-phospho-beta-D-ribosyl)-5-[(5-phospho-beta-D-ribosylamino)methylideneamino]imidazole-4-carboxamide = 5-[(5-phospho-1-deoxy-D-ribulos-1-ylimino)methylamino]-1-(5-phospho-beta-D-ribosyl)imidazole-4-carboxamide. Its pathway is amino-acid biosynthesis; L-histidine biosynthesis; L-histidine from 5-phospho-alpha-D-ribose 1-diphosphate: step 4/9. This Synechococcus sp. (strain RCC307) protein is 1-(5-phosphoribosyl)-5-[(5-phosphoribosylamino)methylideneamino] imidazole-4-carboxamide isomerase.